Consider the following 401-residue polypeptide: Argininosuccinate synthase (401 aa).

9–17 (AYSGGLDTS) is an ATP binding site. Position 86 (Tyr-86) interacts with L-citrulline. Gly-116 lines the ATP pocket. Positions 118, 122, and 123 each coordinate L-aspartate. L-citrulline is bound at residue Asn-122. L-citrulline contacts are provided by Arg-126, Ser-174, Ser-183, Glu-259, and Tyr-271.

Belongs to the argininosuccinate synthase family. Type 1 subfamily. Homotetramer.

It is found in the cytoplasm. The enzyme catalyses L-citrulline + L-aspartate + ATP = 2-(N(omega)-L-arginino)succinate + AMP + diphosphate + H(+). It functions in the pathway amino-acid biosynthesis; L-arginine biosynthesis; L-arginine from L-ornithine and carbamoyl phosphate: step 2/3. In Bacillus cytotoxicus (strain DSM 22905 / CIP 110041 / 391-98 / NVH 391-98), this protein is Argininosuccinate synthase.